The chain runs to 459 residues: LETM1 domain-containing protein LETM2, mitochondrial (459 aa).

A mitochondrion-targeting transit peptide spans 1–25; that stretch reads MAFYSYNSFLAIFWTRLPGHSVHPP. At 26–176 the chain is on the mitochondrial intermembrane side; the sequence is CSHFPPLAFF…LLRTCADVFR (151 aa). The tract at residues 88–114 is disordered; the sequence is GKPQPEQIPEEPKATDPQPTKDDQTEV. Over residues 97-111 the composition is skewed to basic and acidic residues; sequence EEPKATDPQPTKDDQ. The chain crosses the membrane as a helical span at residues 177-197; it reads LVPFVVFIIVPFMEFLIPVFL. Topologically, residues 198 to 459 are mitochondrial matrix; that stretch reads KLFPDMLPST…QNSKANSKGA (262 aa). In terms of domain architecture, Letm1 RBD spans 220–440; the sequence is KMMGAKLEIA…PAPQLNGTKI (221 aa). The disordered stretch occupies residues 403 to 459; the sequence is LPPSIETPKTNLGIPSSPPPESKEDITDPAPQLNGTKILQAKSQETSQNSKANSKGA. Residues 435-459 are compositionally biased toward polar residues; that stretch reads LNGTKILQAKSQETSQNSKANSKGA.

In terms of tissue distribution, testis and sperm.

The protein localises to the mitochondrion inner membrane. The sequence is that of LETM1 domain-containing protein LETM2, mitochondrial (Letm2) from Rattus norvegicus (Rat).